The primary structure comprises 423 residues: GPI mannosyltransferase 2 (423 aa).

The next 9 helical transmembrane spans lie at 7 to 27, 102 to 122, 128 to 148, 151 to 171, 191 to 211, 228 to 248, 298 to 318, 333 to 353, and 400 to 420; these read LTLI…ILSG, VILG…LVLY, IFNP…PTAT, APYT…LLSI, TGIF…AHIF, FLSA…TETV, LAMP…SHLV, PPPI…LLLF, and YWIG…AGHY.

This sequence belongs to the PIGV family.

The protein resides in the endoplasmic reticulum membrane. The protein operates within glycolipid biosynthesis; glycosylphosphatidylinositol-anchor biosynthesis. Mannosyltransferase involved in glycosylphosphatidylinositol-anchor biosynthesis. Transfers the second mannose to the glycosylphosphatidylinositol during GPI precursor assembly. The sequence is that of GPI mannosyltransferase 2 (GPI18) from Cryptococcus neoformans var. neoformans serotype D (strain JEC21 / ATCC MYA-565) (Filobasidiella neoformans).